We begin with the raw amino-acid sequence, 430 residues long: Purine nucleoside phosphorylase LACC1 (430 aa).

An N6-acetyllysine modification is found at lysine 247. Residues histidine 250, cysteine 284, and histidine 301 each contribute to the Zn(2+) site.

Belongs to the purine nucleoside phosphorylase YfiH/LACC1 family. As to quaternary structure, interacts with FASN. Interacts with SDHA. Interacts with ATF6, EIF2AK3 and ERN1. Post-translationally, phosphorylated on tyrosine residues. As to expression, predominantly expressed in myeloid cells. Highly expressed in primary macrophages and dendritic cells sorted from the peritoneum or spleen, respectively (at protein level).

It localises to the cytoplasm. It is found in the nucleus. The protein resides in the endoplasmic reticulum. The protein localises to the peroxisome. The enzyme catalyses adenosine + phosphate = alpha-D-ribose 1-phosphate + adenine. The catalysed reaction is inosine + phosphate = alpha-D-ribose 1-phosphate + hypoxanthine. It catalyses the reaction guanosine + phosphate = alpha-D-ribose 1-phosphate + guanine. It carries out the reaction S-methyl-5'-thioadenosine + phosphate = 5-(methylsulfanyl)-alpha-D-ribose 1-phosphate + adenine. The enzyme catalyses adenosine + H2O + H(+) = inosine + NH4(+). Purine nucleoside enzyme that catalyzes the phosphorolysis of adenosine, guanosine and inosine nucleosides, yielding D-ribose 1-phosphate and the respective free bases, adenine, guanine and hypoxanthine. Also catalyzes the phosphorolysis of S-methyl-5'-thioadenosine into adenine and S-methyl-5-thio-alpha-D-ribose 1-phosphate. Also has adenosine deaminase activity. Acts as a regulator of innate immunity in macrophages by modulating the purine nucleotide metabolism, thereby regulating the metabolic function and bioenergetic state of macrophages. Enables a purine nucleotide cycle between adenosine and inosine monophosphate and adenylosuccinate that prevents cytoplasmic acidification and balances the cytoplasmic-mitochondrial redox interface. The purine nucleotide cycle consumes aspartate and releases fumarate in a manner involving fatty acid oxidation and ATP-citrate lyase activity. Participates in pattern recognition receptor-induced cytokines in macrophages: associates with the NOD2-signaling complex and promotes optimal NOD2-induced signaling, cytokine secretion and bacterial clearance. Localizes to the endoplasmic reticulum upon PRR stimulation of macrophages and associates with endoplasmic reticulum-stress sensors, promoting the endoplasmic reticulum unfolded protein response (UPR). Does not show laccase activity. The polypeptide is Purine nucleoside phosphorylase LACC1 (Mus musculus (Mouse)).